Here is a 31-residue protein sequence, read N- to C-terminus: Cycloviolin-A (31 aa).

The cyclopeptide (Gly-Asn) cross-link spans 1 to 31 (GVIPCGESCVFIPCISAAIGCSCKNKVCYRN). 3 cysteine pairs are disulfide-bonded: C5-C21, C9-C23, and C14-C28.

In terms of processing, this is a cyclic peptide.

Functionally, probably participates in a plant defense mechanism. Has anti-HIV activity. This Leonia cymosa (Sacha uba) protein is Cycloviolin-A.